Consider the following 136-residue polypeptide: S-protein homolog 6 (136 aa).

The first 17 residues, 1 to 17 (MFIIIFIVLISLIGCET), serve as a signal peptide directing secretion. 2 N-linked (GlcNAc...) asparagine glycosylation sites follow: Asn-76 and Asn-108.

This sequence belongs to the plant self-incompatibility (S1) protein family.

It is found in the secreted. This Arabidopsis thaliana (Mouse-ear cress) protein is S-protein homolog 6.